Consider the following 447-residue polypeptide: Alkylglycerol monooxygenase (447 aa).

The next 2 helical transmembrane spans lie at 43–63 and 111–131; these read ATPF…ILKG and WDST…YYWF. A Fatty acid hydroxylase domain is found at 119 to 249; sequence FTFLGVDFGY…LIIWDRIFGT (131 aa). Residues 132–136 carry the Histidine box-1 motif; sequence HRMAH. A Histidine box-2 motif is present at residues 145 to 149; the sequence is HQAHH. A helical transmembrane segment spans residues 170-190; sequence SWVFYCPLALFIPPSVFAVHI. A Histidine box-3 motif is present at residues 221 to 225; sequence HRVHH. Transmembrane regions (helical) follow at residues 340 to 360, 363 to 383, and 413 to 433; these read VLQF…TAVL, VTLL…GFLL, and IPSL…FWGV.

It belongs to the sterol desaturase family. TMEM195 subfamily. The cofactor is Fe cation. As to expression, highly expressed in lever and small intestine.

The protein resides in the endoplasmic reticulum membrane. It catalyses the reaction 1-O-(1,2-saturated-alkyl)-sn-glycerol + (6R)-L-erythro-5,6,7,8-tetrahydrobiopterin + O2 = a 1-(1-hydroxyalkyl)-sn-glycerol + (6R)-L-erythro-6,7-dihydrobiopterin + H2O. Its function is as follows. Glyceryl-ether monooxygenase that cleaves the O-alkyl bond of ether lipids. Ether lipids are essential components of brain membranes. In Mus musculus (Mouse), this protein is Alkylglycerol monooxygenase (Agmo).